Here is a 312-residue protein sequence, read N- to C-terminus: Probable phytanoyl-CoA dioxygenase (312 aa).

Residues Lys-84, Met-124, His-142–Asp-144, and Trp-160 contribute to the 2-oxoglutarate site. His-142 and Asp-144 together coordinate Fe cation. His-231 is a binding site for Fe cation. Positions 233 and 242 each coordinate 2-oxoglutarate.

It belongs to the PhyH family. The cofactor is Fe cation. Requires L-ascorbate as cofactor.

The enzyme catalyses phytanoyl-CoA + 2-oxoglutarate + O2 = 2-hydroxyphytanoyl-CoA + succinate + CO2. Its pathway is lipid metabolism; fatty acid metabolism. Functionally, converts phytanoyl-CoA to 2-hydroxyphytanoyl-CoA. The polypeptide is Probable phytanoyl-CoA dioxygenase (Caenorhabditis elegans).